The following is a 437-amino-acid chain: Serine--tRNA ligase (437 aa).

Residue 244–246 (TAE) coordinates L-serine. Position 275–277 (275–277 (RSE)) interacts with ATP. Residue E298 coordinates L-serine. Residue 362–365 (EISS) coordinates ATP. S397 serves as a coordination point for L-serine.

The protein belongs to the class-II aminoacyl-tRNA synthetase family. Type-1 seryl-tRNA synthetase subfamily. In terms of assembly, homodimer. The tRNA molecule binds across the dimer.

It is found in the cytoplasm. It catalyses the reaction tRNA(Ser) + L-serine + ATP = L-seryl-tRNA(Ser) + AMP + diphosphate + H(+). The enzyme catalyses tRNA(Sec) + L-serine + ATP = L-seryl-tRNA(Sec) + AMP + diphosphate + H(+). It participates in aminoacyl-tRNA biosynthesis; selenocysteinyl-tRNA(Sec) biosynthesis; L-seryl-tRNA(Sec) from L-serine and tRNA(Sec): step 1/1. In terms of biological role, catalyzes the attachment of serine to tRNA(Ser). Is also able to aminoacylate tRNA(Sec) with serine, to form the misacylated tRNA L-seryl-tRNA(Sec), which will be further converted into selenocysteinyl-tRNA(Sec). In Nitrosomonas eutropha (strain DSM 101675 / C91 / Nm57), this protein is Serine--tRNA ligase.